Consider the following 192-residue polypeptide: Shikimate kinase (192 aa).

27–32 (GTGKTT) lines the ATP pocket. Threonine 31 is a Mg(2+) binding site. Substrate-binding residues include aspartate 49, arginine 73, and glycine 95. An ATP-binding site is contributed by arginine 133. A substrate-binding site is contributed by arginine 152.

This sequence belongs to the shikimate kinase family. As to quaternary structure, monomer. The cofactor is Mg(2+).

The protein localises to the cytoplasm. The enzyme catalyses shikimate + ATP = 3-phosphoshikimate + ADP + H(+). Its pathway is metabolic intermediate biosynthesis; chorismate biosynthesis; chorismate from D-erythrose 4-phosphate and phosphoenolpyruvate: step 5/7. In terms of biological role, catalyzes the specific phosphorylation of the 3-hydroxyl group of shikimic acid using ATP as a cosubstrate. This chain is Shikimate kinase, found in Hahella chejuensis (strain KCTC 2396).